The following is a 408-amino-acid chain: Elongation factor Tu (408 aa).

Residues 10-219 enclose the tr-type G domain; sequence KTHVNVGTIG…ALDTYIPDPV (210 aa). GTP contacts are provided by residues 19–26, 88–92, and 143–146; these read GHVDHGKT, DCPGH, and NKCD. A Mg(2+)-binding site is contributed by threonine 26.

Belongs to the TRAFAC class translation factor GTPase superfamily. Classic translation factor GTPase family. EF-Tu/EF-1A subfamily. In terms of assembly, monomer.

The protein resides in the cytoplasm. It carries out the reaction GTP + H2O = GDP + phosphate + H(+). Its function is as follows. GTP hydrolase that promotes the GTP-dependent binding of aminoacyl-tRNA to the A-site of ribosomes during protein biosynthesis. The sequence is that of Elongation factor Tu from Brachyspira hyodysenteriae (strain ATCC 49526 / WA1).